A 298-amino-acid chain; its full sequence is Ribosomal RNA small subunit methyltransferase A (298 aa).

Residues Asn-35, Leu-37, Gly-62, Glu-83, Asp-108, and Asn-133 each coordinate S-adenosyl-L-methionine.

This sequence belongs to the class I-like SAM-binding methyltransferase superfamily. rRNA adenine N(6)-methyltransferase family. RsmA subfamily.

The protein localises to the cytoplasm. It catalyses the reaction adenosine(1518)/adenosine(1519) in 16S rRNA + 4 S-adenosyl-L-methionine = N(6)-dimethyladenosine(1518)/N(6)-dimethyladenosine(1519) in 16S rRNA + 4 S-adenosyl-L-homocysteine + 4 H(+). Functionally, specifically dimethylates two adjacent adenosines (A1518 and A1519) in the loop of a conserved hairpin near the 3'-end of 16S rRNA in the 30S particle. May play a critical role in biogenesis of 30S subunits. This is Ribosomal RNA small subunit methyltransferase A from Streptococcus pyogenes serotype M2 (strain MGAS10270).